Consider the following 196-residue polypeptide: uncharacterized protein (196 aa).

This is an uncharacterized protein from Acanthamoeba polyphaga mimivirus (APMV).